Reading from the N-terminus, the 806-residue chain is Acetyl-CoA decarbonylase/synthase complex subunit alpha 1 (806 aa).

[4Fe-4S] cluster-binding residues include C73, C76, C77, C79, C84, and C94. H117 contacts CO. [Ni-4Fe-4S] cluster-binding residues include H250, C278, and C323. 2 4Fe-4S ferredoxin-type domains span residues 407 to 436 (DEEF…IPEA) and 446 to 475 (SYLE…LNII). Positions 417, 420, 423, 427, 455, 458, 461, and 465 each coordinate [4Fe-4S] cluster. 3 residues coordinate [Ni-4Fe-4S] cluster: C523, C552, and C587.

Belongs to the Ni-containing carbon monoxide dehydrogenase family. Heterotetramer of two alpha and two epsilon subunits. The ACDS complex is made up of alpha, epsilon, beta, gamma and delta subunits with a probable stoichiometry of (alpha(2)epsilon(2))(4)-beta(8)-(gamma(1)delta(1))(8). The cofactor is [4Fe-4S] cluster. It depends on [Ni-4Fe-4S] cluster as a cofactor.

It carries out the reaction CO + 2 oxidized [2Fe-2S]-[ferredoxin] + H2O = 2 reduced [2Fe-2S]-[ferredoxin] + CO2 + 2 H(+). The protein operates within one-carbon metabolism; methanogenesis from acetate. Part of the ACDS complex that catalyzes the reversible cleavage of acetyl-CoA, allowing growth on acetate as sole source of carbon and energy. The alpha-epsilon subcomponent functions as a carbon monoxide dehydrogenase. In Methanosarcina acetivorans (strain ATCC 35395 / DSM 2834 / JCM 12185 / C2A), this protein is Acetyl-CoA decarbonylase/synthase complex subunit alpha 1.